The sequence spans 221 residues: Adenylate kinase (221 aa).

ATP is bound at residue 10 to 15; the sequence is GAGKGT. The interval 30 to 59 is NMP; sequence STGDMLRAAVKAGTPLGLEAKRYMDAGELV. AMP contacts are provided by residues Thr31, Arg36, 57 to 59, 85 to 88, and Gln92; these read ELV and GFPR. Positions 122–159 are LID; sequence GRRMHPASGRTYHVKFNPPKVEGVDDVTGEPLIQRDDD. Residues Arg123 and 132–133 each bind ATP; that span reads TY. Arg156 and Arg167 together coordinate AMP. Gly207 provides a ligand contact to ATP.

It belongs to the adenylate kinase family. Monomer.

The protein resides in the cytoplasm. The enzyme catalyses AMP + ATP = 2 ADP. Its pathway is purine metabolism; AMP biosynthesis via salvage pathway; AMP from ADP: step 1/1. Catalyzes the reversible transfer of the terminal phosphate group between ATP and AMP. Plays an important role in cellular energy homeostasis and in adenine nucleotide metabolism. The chain is Adenylate kinase from Paraburkholderia phymatum (strain DSM 17167 / CIP 108236 / LMG 21445 / STM815) (Burkholderia phymatum).